The primary structure comprises 226 residues: Cobalt transport protein CbiM 1 (226 aa).

Helical transmembrane passes span 6–26 (GFLP…VVAY), 43–63 (MLLG…MPSV), 75–95 (LGAI…VLLF), 107–127 (TLGA…AAVF), 135–155 (FPFG…TYVT), and 181–201 (VFAL…VVVM).

It belongs to the CbiM family. As to quaternary structure, forms an energy-coupling factor (ECF) transporter complex composed of an ATP-binding protein (A component, CbiO), a transmembrane protein (T component, CbiQ) and 2 possible substrate-capture proteins (S components, CbiM and CbiN) of unknown stoichimetry.

Its subcellular location is the cell inner membrane. The protein operates within cofactor biosynthesis; adenosylcobalamin biosynthesis. In terms of biological role, part of the energy-coupling factor (ECF) transporter complex CbiMNOQ involved in cobalt import. This Pelobacter propionicus (strain DSM 2379 / NBRC 103807 / OttBd1) protein is Cobalt transport protein CbiM 1 (cbim1).